A 101-amino-acid chain; its full sequence is Putative regulatory protein Csac_2087 (101 aa).

The protein belongs to the RemA family.

This is Putative regulatory protein Csac_2087 from Caldicellulosiruptor saccharolyticus (strain ATCC 43494 / DSM 8903 / Tp8T 6331).